We begin with the raw amino-acid sequence, 329 residues long: Protoheme IX farnesyltransferase (329 aa).

7 helical membrane-spanning segments follow: residues 61–81 (LACT…LNCL), 108–128 (AFLI…AGVN), 130–150 (LAAG…TIVL), 158–178 (IVIG…AATG), 186–206 (WLFG…ALLL), 243–263 (LLGV…VLPF), and 284–304 (AKGL…LLLL).

The protein belongs to the UbiA prenyltransferase family. Protoheme IX farnesyltransferase subfamily.

It is found in the cell inner membrane. It carries out the reaction heme b + (2E,6E)-farnesyl diphosphate + H2O = Fe(II)-heme o + diphosphate. It functions in the pathway porphyrin-containing compound metabolism; heme O biosynthesis; heme O from protoheme: step 1/1. Functionally, converts heme B (protoheme IX) to heme O by substitution of the vinyl group on carbon 2 of heme B porphyrin ring with a hydroxyethyl farnesyl side group. The chain is Protoheme IX farnesyltransferase from Synechococcus sp. (strain RCC307).